Reading from the N-terminus, the 887-residue chain is Alanine--tRNA ligase (887 aa).

Zn(2+)-binding residues include H564, H568, C676, and H680.

Belongs to the class-II aminoacyl-tRNA synthetase family. It depends on Zn(2+) as a cofactor.

Its subcellular location is the cytoplasm. The catalysed reaction is tRNA(Ala) + L-alanine + ATP = L-alanyl-tRNA(Ala) + AMP + diphosphate. In terms of biological role, catalyzes the attachment of alanine to tRNA(Ala) in a two-step reaction: alanine is first activated by ATP to form Ala-AMP and then transferred to the acceptor end of tRNA(Ala). Also edits incorrectly charged Ser-tRNA(Ala) and Gly-tRNA(Ala) via its editing domain. This is Alanine--tRNA ligase from Rhizobium meliloti (strain 1021) (Ensifer meliloti).